Consider the following 385-residue polypeptide: Lipoyl synthase, mitochondrial (385 aa).

Cys107, Cys112, Cys118, Cys137, Cys141, Cys144, and Ser352 together coordinate [4Fe-4S] cluster. The Radical SAM core domain maps to 122–341 (KKSEATATIM…RDTALKMGFL (220 aa)).

It belongs to the radical SAM superfamily. Lipoyl synthase family. It depends on [4Fe-4S] cluster as a cofactor.

Its subcellular location is the mitochondrion. The enzyme catalyses [[Fe-S] cluster scaffold protein carrying a second [4Fe-4S](2+) cluster] + N(6)-octanoyl-L-lysyl-[protein] + 2 oxidized [2Fe-2S]-[ferredoxin] + 2 S-adenosyl-L-methionine + 4 H(+) = [[Fe-S] cluster scaffold protein] + N(6)-[(R)-dihydrolipoyl]-L-lysyl-[protein] + 4 Fe(3+) + 2 hydrogen sulfide + 2 5'-deoxyadenosine + 2 L-methionine + 2 reduced [2Fe-2S]-[ferredoxin]. The protein operates within protein modification; protein lipoylation via endogenous pathway; protein N(6)-(lipoyl)lysine from octanoyl-[acyl-carrier-protein]: step 2/2. Functionally, catalyzes the radical-mediated insertion of two sulfur atoms into the C-6 and C-8 positions of the octanoyl moiety bound to the lipoyl domains of lipoate-dependent enzymes, thereby converting the octanoylated domains into lipoylated derivatives. The polypeptide is Lipoyl synthase, mitochondrial (Meyerozyma guilliermondii (strain ATCC 6260 / CBS 566 / DSM 6381 / JCM 1539 / NBRC 10279 / NRRL Y-324) (Yeast)).